A 211-amino-acid polypeptide reads, in one-letter code: Ribosomal RNA small subunit methyltransferase G (211 aa).

Residues Gly-73, 125 to 126 (IE), and Arg-141 each bind S-adenosyl-L-methionine.

The protein belongs to the methyltransferase superfamily. RNA methyltransferase RsmG family.

The protein localises to the cytoplasm. The enzyme catalyses guanosine(527) in 16S rRNA + S-adenosyl-L-methionine = N(7)-methylguanosine(527) in 16S rRNA + S-adenosyl-L-homocysteine. Functionally, specifically methylates the N7 position of guanine in position 527 of 16S rRNA. The protein is Ribosomal RNA small subunit methyltransferase G of Methylobacterium radiotolerans (strain ATCC 27329 / DSM 1819 / JCM 2831 / NBRC 15690 / NCIMB 10815 / 0-1).